Reading from the N-terminus, the 49-residue chain is DNA-directed RNA polymerase subunit Rpo12 (49 aa).

Positions 11, 27, and 30 each coordinate Zn(2+).

It belongs to the archaeal Rpo12/eukaryotic RPC10 RNA polymerase subunit family. Part of the RNA polymerase complex. Zn(2+) is required as a cofactor.

The protein localises to the cytoplasm. The protein resides in the chromosome. The catalysed reaction is RNA(n) + a ribonucleoside 5'-triphosphate = RNA(n+1) + diphosphate. DNA-dependent RNA polymerase (RNAP) catalyzes the transcription of DNA into RNA using the four ribonucleoside triphosphates as substrates. This chain is DNA-directed RNA polymerase subunit Rpo12, found in Thermococcus kodakarensis (strain ATCC BAA-918 / JCM 12380 / KOD1) (Pyrococcus kodakaraensis (strain KOD1)).